A 465-amino-acid polypeptide reads, in one-letter code: Glutamate--tRNA ligase (465 aa).

A 'HIGH' region motif is present at residues 8 to 18; it reads PSPTGDLHIGG. Residues 235–239 carry the 'KMSKS' region motif; sequence RLSKR. Residue lysine 238 participates in ATP binding.

The protein belongs to the class-I aminoacyl-tRNA synthetase family. Glutamate--tRNA ligase type 1 subfamily. Monomer.

It localises to the cytoplasm. It catalyses the reaction tRNA(Glu) + L-glutamate + ATP = L-glutamyl-tRNA(Glu) + AMP + diphosphate. Functionally, catalyzes the attachment of glutamate to tRNA(Glu) in a two-step reaction: glutamate is first activated by ATP to form Glu-AMP and then transferred to the acceptor end of tRNA(Glu). The chain is Glutamate--tRNA ligase from Dichelobacter nodosus (strain VCS1703A).